The sequence spans 540 residues: Na(+)/H(+) antiporter NhaS2 (540 aa).

10 helical membrane passes run 29 to 49 (ITTLVENLIILLLVATLVALV), 71 to 91 (GLSVGLNPELILNFFLPILIF), 117 to 137 (VVISAAITAVLLKIGLGLAWV), 138 to 158 (TAAGVSVILTITDTVSVIAAF), 207 to 227 (IFVAFVGGGLVGLGLGYLCVG), 256 to 276 (LGVSSAIAVVVAGLVIGNLAL), 296 to 316 (FGVNTLIFLLVGIEVYPSILL), 323 to 343 (LIAIVAYQIGRVFSIYPLLYL), 358 to 378 (VLIAGNVKGSLSMALALALPL), and 389 to 409 (LVFSTVMVSLIGQGLSLPWVV).

It belongs to the monovalent cation:proton antiporter 1 (CPA1) transporter (TC 2.A.36) family.

The protein localises to the cell membrane. Required for Na(+) uptake into the cell, especially at low external Na(+) concentrations or low Na(+)/K(+) ratios. May be part of a sodium cycle that permits re-entry of sodium into the cell. This is Na(+)/H(+) antiporter NhaS2 (nhaS2) from Synechocystis sp. (strain ATCC 27184 / PCC 6803 / Kazusa).